A 793-amino-acid chain; its full sequence is Probable phosphoketolase 2 (793 aa).

Belongs to the XFP family. It depends on thiamine diphosphate as a cofactor.

This chain is Probable phosphoketolase 2, found in Nostoc sp. (strain PCC 7120 / SAG 25.82 / UTEX 2576).